We begin with the raw amino-acid sequence, 379 residues long: Oxidized polyvinyl alcohol hydrolase (379 aa).

The N-terminal stretch at 1 to 23 (MNQSLGVLRLTRGVIALALASVA) is a signal peptide. Catalysis depends on charge relay system residues Ser-203 and Ser-309.

This sequence belongs to the peptidase S9A family. Monomer.

The enzyme catalyses nonane-4,6-dione + H2O = pentan-2-one + butanoate + H(+). In terms of biological role, catalyzes the hydrolysis of 4,6-nonanedione, a beta-diketone compound. Also mediates hydrolysis of oxidized polyvinyl alcohol (PVA) in the second step in the degradation of polyvinyl alcohol. Not active toward the monoketone structure. In Pseudomonas sp, this protein is Oxidized polyvinyl alcohol hydrolase (pvaB).